A 449-amino-acid polypeptide reads, in one-letter code: Probable ubiquitin carboxyl-terminal hydrolase 8 (449 aa).

A UBP-type zinc finger spans residues 6–113 (EGCQHLKLKP…FKIKNIKAWQ (108 aa)). Zn(2+) contacts are provided by C8, H10, C38, C41, C51, C54, C59, H64, H68, H74, C87, and C90. Residues 145 to 435 (RGIQNLGATC…QAYLLFYHER (291 aa)) enclose the USP domain. The active-site Nucleophile is C154. Positions 178, 183, 188, 191, 246, 257, 259, 262, 275, 278, 317, and 320 each coordinate Zn(2+). Catalysis depends on H395, which acts as the Proton acceptor.

It belongs to the peptidase C19 family. UBP8 subfamily. As to quaternary structure, component of the 1.8 MDa SAGA (Spt-Ada-Gcn5 acetyltransferase) complex, which is composed of 19 subunits tra1, spt7, taf5, ngg1/ada3, sgf73, spt20, spt8, taf12, taf6, hfi1/ada1, ubp8, gcn5, ada2, spt3, sgf29, taf10, taf9, sgf11 and sus1. The SAGA complex is composed of 4 modules, namely the HAT (histone acetyltransferase) module (gcn5, ada2, ngg1/ada3 and sgf29), the DUB (deubiquitinating) module (ubp8, sgf11, sgf73 and sus1), the core or TAF (TBP-associated factor) module (taf5, taf6, taf9, taf10 and taf12), and the Tra1 or SPT (Suppressor of Ty) module (tra1, hfi1/ada1, spt3, spt7, spt8 and spt20). The Tra1/SPT module binds activators, the core module recruits TBP (TATA-binding protein), the HAT module contains the histone H3 acetyltransferase gcn5, and the DUB module comprises the histone H2B deubiquitinase ubp8.

The protein localises to the nucleus. Its subcellular location is the nucleoplasm. It carries out the reaction Thiol-dependent hydrolysis of ester, thioester, amide, peptide and isopeptide bonds formed by the C-terminal Gly of ubiquitin (a 76-residue protein attached to proteins as an intracellular targeting signal).. Histone deubiquitinating enzyme component of the transcription coactivator SAGA complex. SAGA acts as a general cofactor required for essentially all RNA polymerase II transcription. At the promoters, SAGA is required for transcription pre-initiation complex (PIC) recruitment. It influences RNA polymerase II transcriptional activity through different activities such as TBP interaction (via core/TAF module) and promoter selectivity, interaction with transcription activators (via Tra1/SPT module), and chromatin modification through histone acetylation (via HAT module) and deubiquitination (via DUB module). SAGA preferentially acetylates histones H3 (to form H3K9ac, H3K14ac, H3K18ac and H3K23ac) and H2B and deubiquitinates histone H2B. SAGA interacts with DNA via upstream activating sequences (UASs). Within the DUB module, the correctly positioned zinc finger domains of sgf11 and sgf73 are both required to fully activate the ubiquitin hydrolase ubp8. The DUB module is also linked to the splicing efficiency of many transcripts. The chain is Probable ubiquitin carboxyl-terminal hydrolase 8 (ubp8) from Schizosaccharomyces pombe (strain 972 / ATCC 24843) (Fission yeast).